A 618-amino-acid polypeptide reads, in one-letter code: Glycine--tRNA ligase 2 (618 aa).

Glutamate 187 serves as a coordination point for glycine. ATP is bound by residues 219-221 and 230-231; these read RNE and RV. Glutamate 238 lines the glycine pocket. ATP is bound at residue 347-348; sequence EC. Position 466–468 (466–468) interacts with glycine; that stretch reads EPS. Arginine 473 is a binding site for ATP.

Belongs to the class-II aminoacyl-tRNA synthetase family. As to quaternary structure, homodimer.

The protein localises to the cytoplasm. It catalyses the reaction tRNA(Gly) + glycine + ATP = glycyl-tRNA(Gly) + AMP + diphosphate. It carries out the reaction 2 ATP + H(+) = P(1),P(4)-bis(5'-adenosyl) tetraphosphate + diphosphate. Catalyzes the ATP-dependent ligation of glycine to the 3'-end of its cognate tRNA, via the formation of an aminoacyl-adenylate intermediate (Gly-AMP). Also produces diadenosine tetraphosphate (Ap4A), a universal pleiotropic signaling molecule needed for cell regulation pathways, by direct condensation of 2 ATPs. Thereby, may play a special role in Ap4A homeostasis. This chain is Glycine--tRNA ligase 2 (GRS2), found in Saccharomyces cerevisiae (strain ATCC 204508 / S288c) (Baker's yeast).